Here is an 864-residue protein sequence, read N- to C-terminus: MYMARCGPKNNVLCFPFQLSFLFSKRLINKRFKYTLQTEDEKDMMGSLSKNKIITPEDVEFKLAQLREFSNTLKERIHNTKSVNSDGHQSNSIAPISEDSRNVNVTKISSVPNEEKSKNLSDLIHSSFLEKMDHLVPKVIRERVADDDILAKNLFDRSHSNWAPVIDRLYVSEKRFMDIDSREFSVWLNGTVKYLPFHSILHLDEMLLEQINGDVVKFNTHMYECIFNNLGNLKPTNFNQDGTNDKVILKMKELLERYDKALKITEERINKKEGFPSKVPKMTQAILNNCLKYSTKCSSFHDMDYFITKFRDDYGITPNKQNLTTVIQFYSRKEMTKQAWNTFDTMKFLSTKHFPDICTYNTMLRICEKERNFPKALDLFQEIQDHNIKPTTNTYIMMARVLASSSSNAVVSEGKSDSLRLLGWKYLHELEDKNLYRHKKDDLNLFLAMMALAAFDGDIELSRALYYLFIAKKYKTLCANWKGNILVDQDTIWKSTLMPEMLNYLMLAYARFDPRNLPVLSGYEKGIELRRKFLREFDSSMRLDDTDKLVKFKLPFLPISDLNSEAQVLAESNAIWSFNLENGGTRNTLTSSNEAALEDIKKYRQLLDSFAQEAEDFNEFKFKVMYEVTKMQRESINVNVFNKISLHTYLSIPINLKQQKEFLRRLTFFTFQQHEFEAVIKRLYEGYRNIPSSHTRDQNSISTEAISVSKPETTEDLNLIMHDIWYITCLRHKIMMDTTLYELVMKAAIEFQNEDLAKKVWNDRGKFRTTVPFLKMDQRIRIAKDQKFAHLMVEFFTKQGKYSDAIAIILSSKNRFNWTYSMVRNLHKALEEIEDRNSVEILLDVVNKKSHAKALKWEEQELNM.

The transit peptide at 1-76 (MYMARCGPKN…REFSNTLKER (76 aa)) directs the protein to the mitochondrion. 2 PPR repeats span residues 319–353 (NKQN…STKH) and 356–390 (DICT…NIKP).

The protein belongs to the CCM1 family. As to quaternary structure, binds to mitochondrial small subunit 15S rRNA.

Its subcellular location is the mitochondrion. Its function is as follows. Regulates mitochondrial small subunit maturation by controlling 15S rRNA 5'-end processing. Localizes to the 5' precursor of the 15S rRNA in a position that is subsequently occupied by mS47 in the mature yeast mtSSU. Uses structure and sequence-specific RNA recognition, binding to a single-stranded region of the precursor and specifically recognizing bases -6 to -1. The exchange of Ccm1 for mS47 is coupled to the irreversible removal of precursor rRNA that is accompanied by conformational changes of the mitoribosomal proteins uS5m and mS26. These conformational changes signal completion of 5'-end rRNA processing through protection of the mature 5'-end of the 15S rRNA and stabilization of mS47. The removal of the 5' precursor together with the dissociation of Ccm1 may be catalyzed by the 5'-3' exoribonuclease Pet127. Involved in the specific removal of group I introns in mitochondrial encoded transcripts. The protein is Mitochondrial 15S rRNA processing factor CCM1 (CCM1) of Saccharomyces cerevisiae (strain JAY291) (Baker's yeast).